The following is a 303-amino-acid chain: Nucleotide-binding protein USA300HOU_0794 (303 aa).

18–25 (GLSGAGKS) lines the ATP pocket. 69–72 (DLRG) lines the GTP pocket.

Belongs to the RapZ-like family.

Functionally, displays ATPase and GTPase activities. In Staphylococcus aureus (strain USA300 / TCH1516), this protein is Nucleotide-binding protein USA300HOU_0794.